The sequence spans 175 residues: Thioredoxin M-type, chloroplastic (175 aa).

A chloroplast-targeting transit peptide spans 1–62 (MALETCLRGW…ARRPSRFVCK (62 aa)). Residues 63–174 (CKNVVDEVIV…LCTIIDKYIG (112 aa)) form the Thioredoxin domain. An intrachain disulfide couples cysteine 98 to cysteine 101.

Belongs to the thioredoxin family. Plant M-type subfamily. Forms a complex with heterodimeric ferredoxin-thioredoxin reductase (FTR) and ferredoxin.

Its subcellular location is the plastid. The protein resides in the chloroplast. Functionally, participates in various redox reactions through the reversible oxidation of the active center dithiol to a disulfide. The M form is known to activate NADP-malate dehydrogenase. This Triticum aestivum (Wheat) protein is Thioredoxin M-type, chloroplastic.